Consider the following 422-residue polypeptide: L-threonine dehydratase biosynthetic IlvA (422 aa).

An N6-(pyridoxal phosphate)lysine modification is found at Lys56. Pyridoxal 5'-phosphate is bound by residues Asn83, 189-193 (GGGGL), and Ser315. Positions 339–413 (HYFILNFPQR…FDPSNIYINE (75 aa)) constitute an ACT-like domain.

It belongs to the serine/threonine dehydratase family. Homotetramer. Pyridoxal 5'-phosphate serves as cofactor.

It catalyses the reaction L-threonine = 2-oxobutanoate + NH4(+). The protein operates within amino-acid biosynthesis; L-isoleucine biosynthesis; 2-oxobutanoate from L-threonine: step 1/1. Functionally, catalyzes the anaerobic formation of alpha-ketobutyrate and ammonia from threonine in a two-step reaction. The first step involved a dehydration of threonine and a production of enamine intermediates (aminocrotonate), which tautomerizes to its imine form (iminobutyrate). Both intermediates are unstable and short-lived. The second step is the nonenzymatic hydrolysis of the enamine/imine intermediates to form 2-ketobutyrate and free ammonia. In the low water environment of the cell, the second step is accelerated by RidA. This Staphylococcus epidermidis (strain ATCC 12228 / FDA PCI 1200) protein is L-threonine dehydratase biosynthetic IlvA (ilvA).